The sequence spans 184 residues: MDTQKIEAAVKMIIEAVGEDANREGLQETPARVARMYQEIFSGLGQTAEEHLSKSFEIIDDNMVVEKDIFFHTMCEHHFLPFYGRAHIAYIPDGRVAGLSKLARTVEVYSKKPQIQERLNIEVADALMDYLGAKGAFVVIEAEHMCMSMRGVRKPGTATLTTVARGLFETDKDLRDQAYRLMGL.

Zn(2+)-binding residues include Cys75, His78, and Cys146.

This sequence belongs to the GTP cyclohydrolase I family. As to quaternary structure, homomer.

It carries out the reaction GTP + H2O = 7,8-dihydroneopterin 3'-triphosphate + formate + H(+). Its pathway is cofactor biosynthesis; 7,8-dihydroneopterin triphosphate biosynthesis; 7,8-dihydroneopterin triphosphate from GTP: step 1/1. The polypeptide is GTP cyclohydrolase 1 (Streptococcus pneumoniae serotype 19F (strain G54)).